The following is a 487-amino-acid chain: Glutamate mutase epsilon subunit (487 aa).

Residue Arg-62 coordinates L-glutamate. Gly-64 lines the adenosylcob(III)alamin pocket. Arg-96 is an L-glutamate binding site. Position 119 (Asn-119) interacts with adenosylcob(III)alamin. Residues 145-146 (RH), Glu-167, and Tyr-173 contribute to the L-glutamate site. Pro-176 serves as a coordination point for adenosylcob(III)alamin. Tyr-177 contributes to the L-glutamate binding site. Adenosylcob(III)alamin contacts are provided by Phe-289, Lys-318, and Glu-322. Residues 465–487 (SDGKLIGRPGGDNSPAGGASDAD) form a disordered region.

The protein belongs to the methylaspartate mutase GlmE subunit family. As to quaternary structure, heterotetramer composed of 2 epsilon subunits (GlmE) and 2 sigma subunits (GlmS). GlmE exists as a homodimer and GlmS as a monomer. Adenosylcob(III)alamin serves as cofactor.

The catalysed reaction is (2S,3S)-3-methyl-L-aspartate = L-glutamate. It participates in amino-acid degradation; L-glutamate degradation via mesaconate pathway; acetate and pyruvate from L-glutamate: step 1/4. In terms of biological role, catalyzes the carbon skeleton rearrangement of L-glutamate to L-threo-3-methylaspartate ((2S,3S)-3-methylaspartate). The sequence is that of Glutamate mutase epsilon subunit from Haloarcula marismortui (strain ATCC 43049 / DSM 3752 / JCM 8966 / VKM B-1809) (Halobacterium marismortui).